The sequence spans 549 residues: Thermosome subunit (549 aa).

Over residues 528–538 (EKEKEGEKGGG) the composition is skewed to basic and acidic residues. The disordered stretch occupies residues 528–549 (EKEKEGEKGGGSEEFSGSSDLD). Positions 540–549 (EEFSGSSDLD) are enriched in low complexity.

Belongs to the TCP-1 chaperonin family. Forms an oligomeric complex of eight-membered rings.

In terms of biological role, molecular chaperone; binds unfolded polypeptides in vitro, and has a weak ATPase activity. The protein is Thermosome subunit (ths) of Pyrococcus horikoshii (strain ATCC 700860 / DSM 12428 / JCM 9974 / NBRC 100139 / OT-3).